The chain runs to 581 residues: uncharacterized protein (581 aa).

This is an uncharacterized protein from Acanthamoeba polyphaga mimivirus (APMV).